The sequence spans 290 residues: 4-hydroxy-3-methylbut-2-enyl diphosphate reductase (290 aa).

Cys12 is a binding site for [4Fe-4S] cluster. (2E)-4-hydroxy-3-methylbut-2-enyl diphosphate contacts are provided by His50 and His83. The dimethylallyl diphosphate site is built by His50 and His83. Positions 50 and 83 each coordinate isopentenyl diphosphate. Cys105 is a [4Fe-4S] cluster binding site. His133 serves as a coordination point for (2E)-4-hydroxy-3-methylbut-2-enyl diphosphate. His133 contributes to the dimethylallyl diphosphate binding site. Residue His133 coordinates isopentenyl diphosphate. The active-site Proton donor is Glu135. Thr173 contributes to the (2E)-4-hydroxy-3-methylbut-2-enyl diphosphate binding site. Cys202 serves as a coordination point for [4Fe-4S] cluster. (2E)-4-hydroxy-3-methylbut-2-enyl diphosphate-binding residues include Ser230, Asn232, and Ser274. Dimethylallyl diphosphate is bound by residues Ser230, Asn232, and Ser274. The isopentenyl diphosphate site is built by Ser230, Asn232, and Ser274.

Belongs to the IspH family. It depends on [4Fe-4S] cluster as a cofactor.

The catalysed reaction is isopentenyl diphosphate + 2 oxidized [2Fe-2S]-[ferredoxin] + H2O = (2E)-4-hydroxy-3-methylbut-2-enyl diphosphate + 2 reduced [2Fe-2S]-[ferredoxin] + 2 H(+). The enzyme catalyses dimethylallyl diphosphate + 2 oxidized [2Fe-2S]-[ferredoxin] + H2O = (2E)-4-hydroxy-3-methylbut-2-enyl diphosphate + 2 reduced [2Fe-2S]-[ferredoxin] + 2 H(+). It participates in isoprenoid biosynthesis; dimethylallyl diphosphate biosynthesis; dimethylallyl diphosphate from (2E)-4-hydroxy-3-methylbutenyl diphosphate: step 1/1. The protein operates within isoprenoid biosynthesis; isopentenyl diphosphate biosynthesis via DXP pathway; isopentenyl diphosphate from 1-deoxy-D-xylulose 5-phosphate: step 6/6. Its function is as follows. Catalyzes the conversion of 1-hydroxy-2-methyl-2-(E)-butenyl 4-diphosphate (HMBPP) into a mixture of isopentenyl diphosphate (IPP) and dimethylallyl diphosphate (DMAPP). Acts in the terminal step of the DOXP/MEP pathway for isoprenoid precursor biosynthesis. This chain is 4-hydroxy-3-methylbut-2-enyl diphosphate reductase, found in Nitratidesulfovibrio vulgaris (strain DP4) (Desulfovibrio vulgaris).